Here is a 413-residue protein sequence, read N- to C-terminus: Hibernation-specific plasma protein HP-55 (413 aa).

Positions 1 to 24 (MPSSISWGLLLLAALSCLGPGSLA) are cleaved as a signal peptide. Gln-25 is subject to Pyrrolidone carboxylic acid. N-linked (GlcNAc...) asparagine glycans are attached at residues Asn-65, Asn-102, Asn-165, and Asn-266. Positions 368–387 (GGTVLGAEAMLQAPIMKFDR) are RCL.

This sequence belongs to the serpin family. Plasma proteins HP-20, HP-25, HP-27 and HP-55 form a 140 kDa complex via disulfide bonds in the plasma. In terms of processing, the N-terminus is blocked. As to expression, plasma; synthesized in the liver.

The protein resides in the secreted. Its function is as follows. Protease inhibitor. In Tamias sibiricus (Siberian chipmunk), this protein is Hibernation-specific plasma protein HP-55.